Consider the following 607-residue polypeptide: Heterocyst differentiation ATP-binding protein HepA (607 aa).

One can recognise an ABC transmembrane type-1 domain in the interval alanine 32 to threonine 330. 5 consecutive transmembrane segments (helical) span residues isoleucine 33–leucine 53, isoleucine 77–leucine 97, phenylalanine 163–valine 182, isoleucine 186–leucine 208, and isoleucine 290–valine 310. The ABC transporter domain maps to isoleucine 364–methionine 598. Glycine 397 to threonine 404 lines the ATP pocket.

The protein belongs to the ABC transporter superfamily.

It is found in the cell inner membrane. Acts early in the process of morphological differentiation of heterocysts. This is Heterocyst differentiation ATP-binding protein HepA (hepA) from Nostoc sp. (strain PCC 7120 / SAG 25.82 / UTEX 2576).